The sequence spans 602 residues: Glutaminase liver isoform, mitochondrial (602 aa).

The N-terminal 14 residues, 1–14, are a transit peptide targeting the mitochondrion; that stretch reads MRSMRALQNALSRA. Disordered stretches follow at residues 1–28 and 46–67; these read MRSM…HPSR and QGRG…SNSG. Serine 219 is a binding site for substrate. Position 253 is an N6-succinyllysine (lysine 253). A substrate-binding site is contributed by asparagine 268. An N6-acetyllysine mark is found at lysine 279 and lysine 284. Residues glutamate 314 and asparagine 321 each contribute to the substrate site. Lysine 329 is subject to N6-acetyllysine. 3 residues coordinate substrate: tyrosine 347, tyrosine 399, and valine 417. ANK repeat units follow at residues 518–551 and 552–585; these read DSRT…VKDR and WGNI…SETQ.

Belongs to the glutaminase family. In terms of assembly, homotetramer, dimer of dimers. Does not assemble into higher oligomers. Interacts with the PDZ domain of the syntrophin SNTA1. Interacts with the PDZ domain of TAX1BP3. In terms of tissue distribution, liver specific.

The protein localises to the mitochondrion. It carries out the reaction L-glutamine + H2O = L-glutamate + NH4(+). In terms of biological role, plays an important role in the regulation of glutamine catabolism. Promotes mitochondrial respiration and increases ATP generation in cells by catalyzing the synthesis of glutamate and alpha-ketoglutarate. Increases cellular anti-oxidant function via NADH and glutathione production. May play a role in preventing tumor proliferation. In Rattus norvegicus (Rat), this protein is Glutaminase liver isoform, mitochondrial (Gls2).